Consider the following 328-residue polypeptide: Flotillin-like protein FloA (328 aa).

2 consecutive transmembrane segments (helical) span residues 9-29 and 30-50; these read LLIT…VPVG and LWIS…IGMR.

It belongs to the flotillin-like FloA family. In terms of assembly, homooligomerizes.

The protein resides in the cell membrane. The protein localises to the membrane raft. Found in functional membrane microdomains (FMM) that may be equivalent to eukaryotic membrane rafts. FMMs are highly dynamic and increase in number as cells age. Flotillins are thought to be important factors in membrane fluidity. The polypeptide is Flotillin-like protein FloA (Exiguobacterium sp. (strain ATCC BAA-1283 / AT1b)).